A 500-amino-acid polypeptide reads, in one-letter code: MSGSMAQAFAHNFLGQSPRWYKASIVAFLLLNPPLFFAVSPAAAGWCLVIEFIFTLAMALKCYPLMPGGLLLVQALVLGMTTPQALYDELVHNFPVILLLMFMVAGIYFMKELLLYLFSRLLLGVRSKALLGLLFCFLSAFLSAFLDALTVTAVIISAAVGFYSVYHRVASGNDPRQDSAFADDQQLPALHHDDLEQFRAFLRSLLMHGAVGTALGGVCTLVGEPQNLLIGHEMGWHFADFFSKVAPVSMPVLAAGLVTCVLLEKLRWFGYGTLLPDNVRQVLANYAAEDDAQRTSRQRAALLVQGLAALILIVALALHVAEVGLIGLLVIVLITAFTGITDEHRLGNAFKDAMPFTALLVVFFAVVAVIHQQQLFTPLIQWVLALPADQQPGMLFIANGLLSAISDNVFVATIYITEVKQAFISGQMSREHFETLAIAINTGTNLPSVATPNGQAAFLFLLTSAIAPLVRLSYGRMVWMALPYTVVMGLLGWYAVSYWL.

12 helical membrane passes run 34–54, 62–82, 90–110, 129–149, 150–170, 205–225, 241–261, 311–331, 350–370, 394–414, 449–469, and 477–497; these read PLFFAVSPAAAGWCLVIEFIF, CYPLMPGGLLLVQALVLGMTT, LVHNFPVILLLMFMVAGIYFM, ALLGLLFCFLSAFLSAFLDAL, TVTAVIISAAVGFYSVYHRVA, LLMHGAVGTALGGVCTLVGEP, FFSKVAPVSMPVLAAGLVTCV, ILIVALALHVAEVGLIGLLVI, FKDAMPFTALLVVFFAVVAVI, MLFIANGLLSAISDNVFVATI, VATPNGQAAFLFLLTSAIAPL, and MVWMALPYTVVMGLLGWYAVS.

This sequence belongs to the NhaB Na(+)/H(+) (TC 2.A.34) antiporter family.

It is found in the cell inner membrane. It catalyses the reaction 2 Na(+)(in) + 3 H(+)(out) = 2 Na(+)(out) + 3 H(+)(in). In terms of biological role, na(+)/H(+) antiporter that extrudes sodium in exchange for external protons. This is Na(+)/H(+) antiporter NhaB from Pseudomonas fluorescens (strain ATCC BAA-477 / NRRL B-23932 / Pf-5).